The primary structure comprises 400 residues: Enolase (400 aa).

Residue Gln-154 participates in (2R)-2-phosphoglycerate binding. Residue Glu-197 is the Proton donor of the active site. Residues Asp-233, Glu-274, and Asp-301 each contribute to the Mg(2+) site. (2R)-2-phosphoglycerate-binding residues include Lys-326, Arg-355, Ser-356, and Lys-377. Lys-326 serves as the catalytic Proton acceptor.

This sequence belongs to the enolase family. It depends on Mg(2+) as a cofactor.

The protein resides in the cytoplasm. The protein localises to the secreted. It is found in the cell surface. The enzyme catalyses (2R)-2-phosphoglycerate = phosphoenolpyruvate + H2O. It participates in carbohydrate degradation; glycolysis; pyruvate from D-glyceraldehyde 3-phosphate: step 4/5. Catalyzes the reversible conversion of 2-phosphoglycerate (2-PG) into phosphoenolpyruvate (PEP). It is essential for the degradation of carbohydrates via glycolysis. In Picrophilus torridus (strain ATCC 700027 / DSM 9790 / JCM 10055 / NBRC 100828 / KAW 2/3), this protein is Enolase.